The sequence spans 108 residues: uncharacterized protein (108 aa).

The tract at residues M1–L108 is disordered. A compositionally biased stretch (basic residues) spans K26–L56. Residues G58–P70 are compositionally biased toward polar residues. Positions K73–K92 are enriched in basic residues. Residues M93–L108 are compositionally biased toward basic and acidic residues.

This is an uncharacterized protein from Homo sapiens (Human).